We begin with the raw amino-acid sequence, 1056 residues long: Contactin-5 (1056 aa).

Low complexity predominate over residues 1–14; the sequence is MKADSSSSSSMSSR. Residues 1–33 form a disordered region; that stretch reads MKADSSSSSSMSSRMRLRNSHGVGSSSQDWSPF. Polar residues predominate over residues 22-31; the sequence is GVGSSSQDWS. 6 consecutive Ig-like C2-type domains span residues 57–142, 154–240, 258–343, 348–432, 438–519, and 527–622; these read PVFI…IVLS, PFSG…RVLS, PKIE…GHLQ, PQWI…AELK, PMFN…AELT, and PMRV…AELL. 3 disulfides stabilise this stretch: Cys-81/Cys-131, Cys-175/Cys-227, and Cys-280/Cys-327. N-linked (GlcNAc...) asparagine glycans are attached at residues Asn-96 and Asn-119. The N-linked (GlcNAc...) asparagine glycan is linked to Asn-355. 3 disulfide bridges follow: Cys-369–Cys-416, Cys-459–Cys-507, and Cys-549–Cys-606. 2 N-linked (GlcNAc...) asparagine glycosylation sites follow: Asn-489 and Asn-496. Fibronectin type-III domains lie at 629–727, 732–829, 834–928, and 933–1023; these read PPGV…TKEA, APAN…SAEG, PPSE…TKKN, and PPGN…TSSG. Residues 711–736 form a disordered region; sequence GTGDPSPPSRAVRTKEAVPSVAPANV. N-linked (GlcNAc...) asparagine glycosylation is found at Asn-772, Asn-887, Asn-945, and Asn-958. Asn-1035 carries the GPI-anchor amidated asparagine lipid modification. Residues 1036 to 1056 constitute a propeptide, removed in mature form; it reads SPPGLAWTALFLSLMVPSFPL.

It belongs to the immunoglobulin superfamily. Contactin family.

The protein resides in the cell membrane. Contactins mediate cell surface interactions during nervous system development. This is Contactin-5 (cntn5) from Danio rerio (Zebrafish).